The chain runs to 253 residues: Uridylate kinase (253 aa).

26–29 (KLSG) is a binding site for ATP. Residue Gly68 participates in UMP binding. ATP-binding residues include Gly69 and Arg73. UMP contacts are provided by residues Asp88 and 149-156 (TGNPFFTT). Residues Thr176, Tyr182, and Asp185 each coordinate ATP.

The protein belongs to the UMP kinase family. As to quaternary structure, homohexamer.

It localises to the cytoplasm. It carries out the reaction UMP + ATP = UDP + ADP. The protein operates within pyrimidine metabolism; CTP biosynthesis via de novo pathway; UDP from UMP (UMPK route): step 1/1. Its activity is regulated as follows. Inhibited by UTP. Functionally, catalyzes the reversible phosphorylation of UMP to UDP. This Chromohalobacter salexigens (strain ATCC BAA-138 / DSM 3043 / CIP 106854 / NCIMB 13768 / 1H11) protein is Uridylate kinase.